The primary structure comprises 190 residues: uncharacterized protein (190 aa).

4 helical membrane-spanning segments follow: residues 15–35 (LVMS…VLAI), 58–78 (FSSF…GVLI), 94–114 (FFSA…YFAF), and 148–168 (FLFF…SFFV).

It localises to the membrane. This is an uncharacterized protein from Saccharomyces cerevisiae (strain ATCC 204508 / S288c) (Baker's yeast).